The following is a 310-amino-acid chain: AT-hook motif nuclear-localized protein 15 (310 aa).

Disordered regions lie at residues 15 to 112 (VESP…KESP) and 239 to 310 (EEEQ…PPSY). Composition is skewed to polar residues over residues 31–41 (SNNNNPPTMTR) and 51–67 (TTNN…SQEE). Positions 88-100 (RRPRGRPPGSKNK) form a DNA-binding region, a.T hook. The segment covering 94 to 104 (PPGSKNKPKSP) has biased composition (low complexity). The PPC domain maps to 112–251 (PNSLQSHVLE…QQQEQPLQLE (140 aa)). Over residues 301–310 (GPPPRAPPSY) the composition is skewed to pro residues.

The protein resides in the nucleus. Its function is as follows. Transcription factor that specifically binds AT-rich DNA sequences related to the nuclear matrix attachment regions (MARs). Binds the DNA sequence GNFEI (GA-negative feedback element I) in the GA3OX1 promoter. Negatively regulates plant innate immunity (PTI) to pathogens through the down-regulation of the PAMP-triggered FRK1 expression. This chain is AT-hook motif nuclear-localized protein 15, found in Arabidopsis thaliana (Mouse-ear cress).